The sequence spans 87 residues: Putative defensin-like protein 169 (87 aa).

The first 21 residues, 1-21, serve as a signal peptide directing secretion; sequence MKKTFSFTVLILFVIPLLVTG. Cystine bridges form between C36/C86, C48/C74, C53/C80, and C57/C82.

The protein belongs to the DEFL family.

Its subcellular location is the secreted. This Arabidopsis thaliana (Mouse-ear cress) protein is Putative defensin-like protein 169.